The following is a 120-amino-acid chain: Spermidine export protein MdtJ (120 aa).

4 helical membrane-spanning segments follow: residues 1 to 21 (MFYW…TLSM), 31 to 51 (TGFI…AFAV), 54 to 74 (IALG…ITLF), and 81 to 101 (ESLS…IVLI).

This sequence belongs to the drug/metabolite transporter (DMT) superfamily. Small multidrug resistance (SMR) (TC 2.A.7.1) family. MdtJ subfamily. As to quaternary structure, forms a complex with MdtI.

It is found in the cell inner membrane. Catalyzes the excretion of spermidine. The polypeptide is Spermidine export protein MdtJ (Klebsiella pneumoniae subsp. pneumoniae (strain ATCC 700721 / MGH 78578)).